A 32-amino-acid chain; its full sequence is Ranatuerin-2Lb (32 aa).

C27 and C32 form a disulfide bridge.

Expressed by the skin glands.

It is found in the secreted. In terms of biological role, antibacterial activity against Gram-positive bacterium S.aureus and Gram-negative bacterium E.coli. Has activity against C.albicans. The protein is Ranatuerin-2Lb of Rana luteiventris (Columbia spotted frog).